Reading from the N-terminus, the 126-residue chain is MASPHRLLKDYQQLLSLSQKILHLAVNGQWDTLVEQEIVYVQSVEGLVNTPIPDEIDSVMRLHLRQILQEVMDNEAKVKQLLQKRMDELSSLMGQSLKQKSINTTYNEFAGQRMLPGDALPDETRS.

The required for homodimerization stretch occupies residues 1–50 (MASPHRLLKDYQQLLSLSQKILHLAVNGQWDTLVEQEIVYVQSVEGLVNT). The tract at residues 60–98 (MRLHLRQILQEVMDNEAKVKQLLQKRMDELSSLMGQSLK) is fliD binding.

The protein belongs to the FliT family. As to quaternary structure, homodimer. Interacts with FliD and FlhC.

The protein localises to the cytoplasm. Its subcellular location is the cytosol. Functionally, dual-function protein that regulates the transcription of class 2 flagellar operons and that also acts as an export chaperone for the filament-capping protein FliD. As a transcriptional regulator, acts as an anti-FlhDC factor; it directly binds FlhC, thus inhibiting the binding of the FlhC/FlhD complex to class 2 promoters, resulting in decreased expression of class 2 flagellar operons. As a chaperone, effects FliD transition to the membrane by preventing its premature polymerization, and by directing it to the export apparatus. The sequence is that of Flagellar protein FliT from Pectobacterium carotovorum subsp. carotovorum (strain PC1).